The sequence spans 193 residues: Ion-translocating oxidoreductase complex subunit A (193 aa).

6 consecutive transmembrane segments (helical) span residues 5-25 (VLLLIGTVLVNNFVLVQFLGL), 39-59 (IGMSLATTFVLTLASVTSYLV), 63-83 (ILIPLDITYLRTMSFILVIAV), 102-122 (LLGIFLPLITTNCAVLGVALL), 134-154 (AVYGFGAAVGFSLVLVLFAAL), and 171-191 (SIALITAGLMSMAFMGFTGLV).

The protein belongs to the NqrDE/RnfAE family. The complex is composed of six subunits: RnfA, RnfB, RnfC, RnfD, RnfE and RnfG.

The protein localises to the cell inner membrane. In terms of biological role, part of a membrane-bound complex that couples electron transfer with translocation of ions across the membrane. This chain is Ion-translocating oxidoreductase complex subunit A, found in Pseudoalteromonas translucida (strain TAC 125).